The primary structure comprises 60 residues: Metallothionein B (60 aa).

The beta stretch occupies residues 1–28 (MDPCDCSKSGTCNCGGSCTCTNCSCTSC). Residues cysteine 4, cysteine 6, cysteine 12, cysteine 14, cysteine 18, cysteine 20, cysteine 23, cysteine 25, cysteine 28, cysteine 32, cysteine 33, cysteine 35, cysteine 36, cysteine 40, cysteine 43, cysteine 47, cysteine 49, cysteine 54, cysteine 58, and cysteine 59 each contribute to the a divalent metal cation site. The interval 29–60 (KKSCCPCCPSGCTKCASGCVCKGKTCDTSCCQ) is alpha.

Belongs to the metallothionein superfamily. Type 1 family.

Functionally, metallothioneins have a high content of cysteine residues that bind various heavy metals. This is Metallothionein B (mtb) from Chionodraco hamatus (Antarctic teleost icefish).